The sequence spans 640 residues: Probable potassium transport system protein Kup (640 aa).

12 helical membrane-spanning segments follow: residues 26 to 46 (IAGLAVAAVGVVYGDIGTSPL), 69 to 89 (ILSLVFWALVLVVSAKYVLFI), 117 to 137 (AWVLSALGVFGAALFYGDGMI), 155 to 175 (PAFRPYVLPIALAVLCGLFVI), 186 to 206 (IFGPVMLVWFVLLAVLGIAGI), 224 to 244 (FFADMPLVGWLSLGAVVLAIT), 265 to 285 (WFLVVFPSLYLNYLGQGALIL), 297 to 317 (LLVPDALVYPMVAMATLATII), 355 to 375 (IYVPSINWMLLGAVVALVVGF), 384 to 404 (AYGIAVTLTMMIDTLLAFVVV), 415 to 435 (AGLFLGVFLAVDVAFFSATTV), and 437 to 457 (ILAGGWFPLLVGALIFTLLTT).

It belongs to the HAK/KUP transporter (TC 2.A.72) family.

The protein resides in the cell inner membrane. It catalyses the reaction K(+)(in) + H(+)(in) = K(+)(out) + H(+)(out). Its function is as follows. Transport of potassium into the cell. Likely operates as a K(+):H(+) symporter. This Aromatoleum aromaticum (strain DSM 19018 / LMG 30748 / EbN1) (Azoarcus sp. (strain EbN1)) protein is Probable potassium transport system protein Kup.